The sequence spans 395 residues: MATVDRWLLPDGIEEVLPPEAARIEVVRRQMLDLFQRWGYAFVVTPHIEFLESLLTGAGQDLDLRTLKVTDPLSGRLIGFRADITPQVARIDAHTLRREGPCRLCYAGSVLHAKPRALSTSRSPIQLGAELYGDASPASDVEVISLMLEVLEQVAVPDVHMDLGHVGIYRGLARAAGLSGEVEQRLFDALQRKAVDEVEVLTAVLPTAQAAMLRALAELCGGREVLDLAQACLVDAPAEVHAALDELIAIADSLGVRYPELPLYFDLSELRGYNYHTGVVFAAFVPGVGQSIAQGGRYDDIGADFGRARPATGFSTDLKTLVTLGQVAPAEPVVGIWAPDSHDVYLWQMVQRLRRQGERVVQALPGQRIDAARAGGCDRQLLLSDGQWQVVPLAL.

The protein belongs to the class-II aminoacyl-tRNA synthetase family. HisZ subfamily. In terms of assembly, heteromultimer composed of HisG and HisZ subunits.

The protein localises to the cytoplasm. It functions in the pathway amino-acid biosynthesis; L-histidine biosynthesis; L-histidine from 5-phospho-alpha-D-ribose 1-diphosphate: step 1/9. Required for the first step of histidine biosynthesis. May allow the feedback regulation of ATP phosphoribosyltransferase activity by histidine. The polypeptide is ATP phosphoribosyltransferase regulatory subunit (Azotobacter vinelandii (strain DJ / ATCC BAA-1303)).